The primary structure comprises 342 residues: S-adenosylmethionine:tRNA ribosyltransferase-isomerase (342 aa).

It belongs to the QueA family. In terms of assembly, monomer.

It is found in the cytoplasm. The catalysed reaction is 7-aminomethyl-7-carbaguanosine(34) in tRNA + S-adenosyl-L-methionine = epoxyqueuosine(34) in tRNA + adenine + L-methionine + 2 H(+). It participates in tRNA modification; tRNA-queuosine biosynthesis. In terms of biological role, transfers and isomerizes the ribose moiety from AdoMet to the 7-aminomethyl group of 7-deazaguanine (preQ1-tRNA) to give epoxyqueuosine (oQ-tRNA). This is S-adenosylmethionine:tRNA ribosyltransferase-isomerase from Streptococcus agalactiae serotype III (strain NEM316).